A 560-amino-acid polypeptide reads, in one-letter code: DNA ligase B (560 aa).

The N6-AMP-lysine intermediate role is filled by Lys-124.

The protein belongs to the NAD-dependent DNA ligase family. LigB subfamily.

It carries out the reaction NAD(+) + (deoxyribonucleotide)n-3'-hydroxyl + 5'-phospho-(deoxyribonucleotide)m = (deoxyribonucleotide)n+m + AMP + beta-nicotinamide D-nucleotide.. Its function is as follows. Catalyzes the formation of phosphodiester linkages between 5'-phosphoryl and 3'-hydroxyl groups in double-stranded DNA using NAD as a coenzyme and as the energy source for the reaction. This Escherichia coli O7:K1 (strain IAI39 / ExPEC) protein is DNA ligase B.